We begin with the raw amino-acid sequence, 204 residues long: Viral interleukin-6 homolog (204 aa).

A signal peptide spans 1-22; it reads MRWFKLWSILLVGSLLVSGTRG.

The protein belongs to the IL-6 superfamily. As to quaternary structure, interacts with host IL6ST.

Initiates signal transduction through binding to interleukin-6 receptor subunit beta IL6ST, independently of the cognate IL6 receptor IL6R. In infected primary effusion lymphoma cells, promotes proliferation of cells, protects them from apoptosis, and promotes immune evasion of interferon activity. Also drives blood to lymphatic endothelial cell differentiation. The chain is Viral interleukin-6 homolog (K2) from Homo sapiens (Human).